The sequence spans 393 residues: METFLFTSESVNEGHPDKLCDQVSDAILDACLEQDPDSKVACETCTKTNMVMVFGEITTKANVDYEKIVRSTCRSIGFVSDDVGLDADKCNVLVNIEQQSPDIAQGVHGHLTKRPEEIGAGDQGHMFGYATDETPELMPLSHVLATKLGARLTEVRKNGTCPWLRPDGKTQVTVEYFNENGAMVPIRVHTVLISTQHDETVTNDEIAADLKEHVIKPVIPEKYLDEKTIFHLNPSGRFVIGGPHGDAGLTGRKIIIDTYGGWGAHGGGAFSGKDPTKVDRSGAYIVRQAAKSIVASGLARRCIVQVSYAIGVPEPLSVFVDTYGTGKIPDKEILNIVKEKFDFRPGMIAISLDLKRGGNGRFLKTAAYGHFGRDDPDFTWEVVKPLKSEKPQQ.

E9 is a binding site for Mg(2+). H15 is an ATP binding site. E43 serves as a coordination point for K(+). Residues E56 and Q99 each contribute to the L-methionine site. ATP contacts are provided by residues 167 to 169 (DGK), 235 to 238 (SGRF), D246, 252 to 253 (RK), A269, K273, and K277. D246 serves as a coordination point for L-methionine. K277 lines the L-methionine pocket.

This sequence belongs to the AdoMet synthase family. Homotetramer. Requires Mn(2+) as cofactor. The cofactor is Mg(2+). It depends on Co(2+) as a cofactor. K(+) serves as cofactor.

The protein localises to the cytoplasm. It catalyses the reaction L-methionine + ATP + H2O = S-adenosyl-L-methionine + phosphate + diphosphate. It participates in amino-acid biosynthesis; S-adenosyl-L-methionine biosynthesis; S-adenosyl-L-methionine from L-methionine: step 1/1. Functionally, catalyzes the formation of S-adenosylmethionine from methionine and ATP. The reaction comprises two steps that are both catalyzed by the same enzyme: formation of S-adenosylmethionine (AdoMet) and triphosphate, and subsequent hydrolysis of the triphosphate. This is S-adenosylmethionine synthase 2 (METK2) from Populus trichocarpa (Western balsam poplar).